Consider the following 130-residue polypeptide: Small ribosomal subunit protein uS11 (130 aa).

It belongs to the universal ribosomal protein uS11 family. As to quaternary structure, part of the 30S ribosomal subunit. Interacts with proteins S7 and S18. Binds to IF-3.

Located on the platform of the 30S subunit, it bridges several disparate RNA helices of the 16S rRNA. Forms part of the Shine-Dalgarno cleft in the 70S ribosome. The polypeptide is Small ribosomal subunit protein uS11 (Prochlorococcus marinus (strain MIT 9215)).